Consider the following 288-residue polypeptide: Ribosomal protein L11 methyltransferase (288 aa).

Residues Thr-134, Gly-157, Asp-179, and Asn-224 each contribute to the S-adenosyl-L-methionine site.

It belongs to the methyltransferase superfamily. PrmA family.

It localises to the cytoplasm. The catalysed reaction is L-lysyl-[protein] + 3 S-adenosyl-L-methionine = N(6),N(6),N(6)-trimethyl-L-lysyl-[protein] + 3 S-adenosyl-L-homocysteine + 3 H(+). Its function is as follows. Methylates ribosomal protein L11. This Caulobacter sp. (strain K31) protein is Ribosomal protein L11 methyltransferase.